Reading from the N-terminus, the 269-residue chain is Probable 3-deoxy-manno-octulosonic acid transferase (269 aa).

The protein resides in the cytoplasm. The catalysed reaction is an alpha-Kdo-(2-&gt;4)-alpha-Kdo-(2-&gt;6)-lipid IVA + CMP-3-deoxy-beta-D-manno-octulosonate = an alpha-Kdo-(2-&gt;4)-alpha-Kdo-(2-&gt;4)-alpha-Kdo-(2-&gt;6)-lipid IVA + CMP + H(+). It participates in bacterial outer membrane biogenesis; LPS core biosynthesis. Its function is as follows. Involved in the biosynthesis of the core oligosaccharide region of lipopolysaccharide (LPS). Required for the addition of 3-deoxy-D-manno-oct-2-ulosonic acid III (KdoIII) to the KdoII residue of the inner lipopolysaccharide core. This chain is Probable 3-deoxy-manno-octulosonic acid transferase, found in Salmonella typhimurium (strain LT2 / SGSC1412 / ATCC 700720).